The following is a 518-amino-acid chain: ETHYLENE INSENSITIVE 3-like 2 protein (518 aa).

Residues 37-73 (DDLSSDEEMEIEELEKKIWRDKQRLKRLKEMAKNGLG) are a coiled coil. The segment at 450–518 (FNHPNDLYRP…GQELPTSWIQ (69 aa)) is disordered. Polar residues-rich tracts occupy residues 475-484 (PSPSTLNQNL) and 500-518 (GTENNLHNQGQELPTSWIQ).

Belongs to the EIN3 family. As to quaternary structure, acts as a homodimer to bind the primary ethylene response element.

The protein resides in the nucleus. In terms of biological role, probable transcription factor acting as a positive regulator in the ethylene response pathway. Could bind the primary ethylene response element present in the ETHYLENE-RESPONSE-FACTOR1 promoter. The polypeptide is ETHYLENE INSENSITIVE 3-like 2 protein (EIL2) (Arabidopsis thaliana (Mouse-ear cress)).